Here is a 493-residue protein sequence, read N- to C-terminus: Solute carrier family 2, facilitated glucose transporter member 3 (493 aa).

Residues 1–10 lie on the Cytoplasmic side of the membrane; the sequence is MGTTKVTPSL. A helical transmembrane segment spans residues 11–32; the sequence is VFAVTVATIGSFQFGYNTGVIN. The Extracellular segment spans residues 33–64; the sequence is APETILKDFLNYTLEERLEDLPSEGLLTALWS. N-linked (GlcNAc...) asparagine glycosylation occurs at N43. The helical transmembrane segment at 65-85 threads the bilayer; it reads LCVAIFSVGGMIGSFSVGLFV. At 86-90 the chain is on the cytoplasmic side; it reads NRFGR. Residues 91 to 111 form a helical membrane-spanning segment; it reads RNSMLLVNLLAIIAGCLMGFA. The Extracellular segment spans residues 112–118; the sequence is KIAESVE. The helical transmembrane segment at 119 to 142 threads the bilayer; it reads MLILGRLLIGIFCGLCTGFVPMYI. At 143 to 153 the chain is on the cytoplasmic side; the sequence is GEVSPTALRGA. A helical membrane pass occupies residues 154–174; the sequence is FGTLNQLGIVVGILVAQIFGL. Q159 is a D-glucose binding site. The Extracellular segment spans residues 175–183; the sequence is DFILGSEEL. A helical membrane pass occupies residues 184–204; that stretch reads WPGLLGLTIIPAILQSAALPF. The Cytoplasmic portion of the chain corresponds to 205 to 269; the sequence is CPESPRFLLI…LFRSPNYVQP (65 aa). A Phosphothreonine modification is found at T232. Residues 270–290 traverse the membrane as a helical segment; that stretch reads LLISIVLQLSQQLSGINAVFY. The interval 277 to 279 is important for selectivity against fructose; the sequence is QLS. D-glucose is bound by residues 280–281 and N286; that span reads QQ. The Extracellular portion of the chain corresponds to 291–304; it reads YSTGIFKDAGVQEP. A helical membrane pass occupies residues 305-325; it reads IYATIGAGVVNTIFTVVSLFL. N315 is a binding site for D-glucose. Residues 326 to 331 lie on the Cytoplasmic side of the membrane; that stretch reads VERAGR. Residues 332–352 form a helical membrane-spanning segment; it reads RTLHMIGLGGMAVCSVFMTIS. The Extracellular portion of the chain corresponds to 353-363; sequence LLLKDDYEAMS. The chain crosses the membrane as a helical span at residues 364–389; it reads FVCIVAILIYVAFFEIGPGPIPWFIV. D-glucose-binding residues include E378 and W386. Residues 390-399 lie on the Cytoplasmic side of the membrane; the sequence is AELFSQGPRP. A helical transmembrane segment spans residues 400–420; sequence AAIAVAGCCNWTSNFLVGMLF. The Extracellular portion of the chain corresponds to 421–429; the sequence is PSAAAYLGA. Residues 430–450 form a helical membrane-spanning segment; it reads YVFIIFAAFLIFFLIFTFFKV. The Cytoplasmic portion of the chain corresponds to 451-493; that stretch reads PETKGRTFEDIARAFEGQAHSGKGPAGVELNSMQPVKETPGNA. The interval 469–493 is disordered; it reads AHSGKGPAGVELNSMQPVKETPGNA. Phosphoserine occurs at positions 471 and 482. Phosphothreonine is present on T489.

Belongs to the major facilitator superfamily. Sugar transporter (TC 2.A.1.1) family. Glucose transporter subfamily. Interacts with SMIM43; the interaction may promote SLC2A3-mediated glucose transport to meet the energy needs of mesendoderm differentiation. As to expression, expressed in spermatozoa (at protein level). Detected in brain (at protein level). Abundantly expressed in the hippocampus, cerebellum and cerebral cortex with lower expression in the dentate gyrus and piriform cortex.

It localises to the cell membrane. The protein resides in the perikaryon. It is found in the cell projection. The catalysed reaction is D-glucose(out) = D-glucose(in). It carries out the reaction D-galactose(in) = D-galactose(out). Deoxyglucose transport is inhibited by D-glucose, D-galactose and maltose. Galactose transport is inhibited by D-glucose and maltose. Its function is as follows. Facilitative glucose transporter. Can also mediate the uptake of various other monosaccharides across the cell membrane. Mediates the uptake of glucose, 2-deoxyglucose, galactose, mannose, xylose and fucose, and probably also dehydroascorbate. Does not mediate fructose transport. Required for mesendoderm differentiation. In Mus musculus (Mouse), this protein is Solute carrier family 2, facilitated glucose transporter member 3.